A 166-amino-acid polypeptide reads, in one-letter code: Putative tRNA (cytidine(34)-2'-O)-methyltransferase (166 aa).

L83, G109, I130, and S138 together coordinate S-adenosyl-L-methionine.

This sequence belongs to the class IV-like SAM-binding methyltransferase superfamily. RNA methyltransferase TrmH family. TrmL subfamily.

It is found in the cytoplasm. The enzyme catalyses cytidine(34) in tRNA + S-adenosyl-L-methionine = 2'-O-methylcytidine(34) in tRNA + S-adenosyl-L-homocysteine + H(+). It catalyses the reaction 5-carboxymethylaminomethyluridine(34) in tRNA(Leu) + S-adenosyl-L-methionine = 5-carboxymethylaminomethyl-2'-O-methyluridine(34) in tRNA(Leu) + S-adenosyl-L-homocysteine + H(+). Its function is as follows. Could methylate the ribose at the nucleotide 34 wobble position in tRNA. The sequence is that of Putative tRNA (cytidine(34)-2'-O)-methyltransferase from Mycoplasma pneumoniae (strain ATCC 29342 / M129 / Subtype 1) (Mycoplasmoides pneumoniae).